We begin with the raw amino-acid sequence, 646 residues long: Autophagy-related protein 28 (646 aa).

Disordered regions lie at residues Met1–Asn148 and Pro221–Lys245. Over residues Ser12–Leu21 the composition is skewed to polar residues. Residues Ser63 to Ser75 are compositionally biased toward low complexity. The segment covering Met106 to Gly122 has biased composition (polar residues). Coiled-coil stretches lie at residues Leu283 to Val350 and Gln485 to His514. Disordered regions lie at residues Ser475–Ser494 and Ala546–Ala612. Composition is skewed to basic and acidic residues over residues Ser557–Glu575 and Arg588–Pro597.

It belongs to the ATG28 family.

Its subcellular location is the cytoplasm. The protein resides in the vacuole membrane. The protein localises to the cytoplasmic vesicle membrane. Its function is as follows. Required for the autophagic degradation of peroxisomes called pexophagy, but not essential for general autophagy. Involved in resistance to elevated pH. This chain is Autophagy-related protein 28, found in Gibberella zeae (strain ATCC MYA-4620 / CBS 123657 / FGSC 9075 / NRRL 31084 / PH-1) (Wheat head blight fungus).